Here is a 250-residue protein sequence, read N- to C-terminus: Probable ABC transporter permease protein BAB2_1148 (250 aa).

Helical transmembrane passes span 12–32 (LLSF…GAVV), 63–83 (VLSG…LMGW), 94–114 (WVQF…IVTL), 122–142 (IFVI…QGVI), 172–192 (VPFI…TVVA), and 211–231 (LYYD…LGLF). Positions 56–236 (IFASLRRVLS…ILGLFMDRLL (181 aa)) constitute an ABC transmembrane type-1 domain.

This sequence belongs to the binding-protein-dependent transport system permease family. The complex is composed of two ATP-binding proteins (BAB2_1147), two transmembrane proteins (BAB2_1148) and a solute-binding protein (BAB2_1146).

The protein localises to the cell inner membrane. Its function is as follows. Probably part of an ABC transporter complex. Probably responsible for the translocation of the substrate across the membrane. The sequence is that of Probable ABC transporter permease protein BAB2_1148 from Brucella abortus (strain 2308).